The primary structure comprises 147 residues: MAAQRLGKRVLSKLQSPSRARGPGGSPSGLQKRHARVTVKYDRRELQRRLDVEKWIDGCLEELYRGRESDMPDEVNIDELLELDSEEERCRKIQGLLEACANPTEDFVQELLAKLRGLHKQPGFPQPSPSDDPSLSPRQDRAHTAPP.

A compositionally biased stretch (basic residues) spans 1–11 (MAAQRLGKRVL). A disordered region spans residues 1–36 (MAAQRLGKRVLSKLQSPSRARGPGGSPSGLQKRHAR). S26 is modified (phosphoserine). The tract at residues 35–120 (ARVTVKYDRR…LLAKLRGLHK (86 aa)) is inhibitory. T38 carries the phosphothreonine; by PKC modification. Positions 118–147 (LHKQPGFPQPSPSDDPSLSPRQDRAHTAPP) are disordered. A phosphoserine mark is found at S128, S134, and S136. Residues 138–147 (RQDRAHTAPP) are compositionally biased toward basic and acidic residues.

Belongs to the PP1 inhibitor family.

It localises to the cytoplasm. Functionally, inhibitor of PPP1CA. Has over 1000-fold higher inhibitory activity when phosphorylated, creating a molecular switch for regulating the phosphorylation status of PPP1CA substrates and smooth muscle contraction. The polypeptide is Protein phosphatase 1 regulatory subunit 14A (Ppp1r14a) (Mus musculus (Mouse)).